The sequence spans 103 residues: Cyanovirin-N homolog (103 aa).

The protein belongs to the cyanovirin-N family.

Its function is as follows. Mannose-binding lectin. This Tuber borchii (White truffle) protein is Cyanovirin-N homolog.